A 28-amino-acid polypeptide reads, in one-letter code: Kappa-stichotoxin-Shd1a/kappa-stichotoxin-Shd1b (28 aa).

Proline 6 is subject to 4-hydroxyproline; in form SHTX-1 (Shd1a). 2 cysteine pairs are disulfide-bonded: cysteine 7–cysteine 19 and cysteine 10–cysteine 25.

Belongs to the sea anemone BBH family. In terms of processing, occurs in 2 forms which differ in the post-translational modification of Pro-6. In form SHTX-1 (Shd1a) Pro-6 is a hydroxyproline while in form SHTX-2 (Shd1b) Pro-6 is unmodified.

Its subcellular location is the secreted. It localises to the nematocyst. Kappa-stichotoxin-Shd1a: inhibits voltage-gated potassium channels (Kv). Its function is as follows. Kappa-stichotoxin-Shd1b: inhibits voltage-gated potassium channels (Kv). This toxin inhibits the binding of 125I-alpha-dendrotoxin to synaptosomal membranes (IC(50)=270 nM). The polypeptide is Kappa-stichotoxin-Shd1a/kappa-stichotoxin-Shd1b (Stichodactyla haddoni (Saddle carpet anemone)).